The chain runs to 185 residues: Ribosome-recycling factor (185 aa).

The protein belongs to the RRF family.

The protein localises to the cytoplasm. In terms of biological role, responsible for the release of ribosomes from messenger RNA at the termination of protein biosynthesis. May increase the efficiency of translation by recycling ribosomes from one round of translation to another. This is Ribosome-recycling factor from Heliobacterium modesticaldum (strain ATCC 51547 / Ice1).